The sequence spans 519 residues: Probable WRKY transcription factor 33 (519 aa).

Disordered stretches follow at residues 1–34 (MAAS…STSS) and 123–212 (SSGV…CTFP). The span at 7–34 (TMDNSRTRQNMNGSANWSQQSGRTSTSS) shows a compositional bias: polar residues. Positions 130–142 (TTTTTTTTTTTTT) are enriched in low complexity. Residues 164 to 174 (TETRPNNQAVS) are compositionally biased toward polar residues. Residues 178–188 (REQRKGEDGYN) are compositionally biased toward basic and acidic residues. The segment at residues 178-242 (REQRKGEDGY…YKGSHNHPKP (65 aa)) is a DNA-binding region (WRKY 1). Zn(2+) is bound by residues C209, C214, H237, and H239. 2 disordered regions span residues 232-255 (VYKG…SSTF) and 267-349 (NRQA…REPR). Residues 245–254 (TRRSSSSSST) show a composition bias toward low complexity. Residues 269–299 (QASSDQPNSNNSFHQSDSFGMQQEDNTTSDS) show a composition bias toward polar residues. A compositionally biased stretch (basic and acidic residues) spans 323 to 332 (PEAKRWKGDN). A DNA-binding region (WRKY 2) is located at residues 356–421 (SDIDILDDGY…YEGKHNHDVP (66 aa)). Zn(2+)-binding residues include C387, C392, H416, and H418.

This sequence belongs to the WRKY group I family. In terms of assembly, interacts with MKS1. Interacts with ATG18A. Interacts with SIB1 and SIB2. Interacts with VQ1 and VQ10. In terms of processing, phosphorylated by MPK4. Phosphorylated on serine residues by MPK3 and MPK6 following infection with the necrotrophic fungal pathogen B.cinerea. As to expression, highly expressed in roots, leaves and flowers, and at lower levels in stems, siliques and seeds.

It localises to the nucleus. Functionally, transcription factor. Interacts specifically with the W box (5'-TTGAC[CT]-3'), a frequently occurring elicitor-responsive cis-acting element. Involved in defense responses. Required for resistance to the necrotrophic fungal pathogen B.cinerea. Regulates the antagonistic relationship between defense pathways mediating responses to the bacterial pathogen P. syringae and the necrotrophic pathogen B.cinerea. Required for the phytoalexin camalexin synthesis following infection with B.cinerea. Acts as a positive regulator of the camalexin biosynthetic genes PAD3 (CYP71B15) and CYP71A13 by binding to their promoters. Acts downstream of MPK3 and MPK6 in reprogramming the expression of camalexin biosynthetic genes, which drives the metabolic flow to camalexin production. Functions with WRKY25 as positive regulator of salt stress response and abscisic acid (ABA) signaling. Functions with WRKY25 and WRKY26 as positive regulator of plant thermotolerance by partially participating in ethylene-response signal transduction pathway. The DNA-binding activity of WRKY33 is increased by SIB1 and SIB2. In Arabidopsis thaliana (Mouse-ear cress), this protein is Probable WRKY transcription factor 33 (WRKY33).